A 1034-amino-acid polypeptide reads, in one-letter code: Presequence protease, mitochondrial (1034 aa).

The N-terminal 26 residues, 1-26 (MLKTRLKQSRAISRVVRRYACSHPIS), are a transit peptide targeting the mitochondrion. Position 97 (His97) interacts with Zn(2+). The Proton acceptor role is filled by Glu100. Residue His101 coordinates Zn(2+). Glu173 is an active-site residue. A Zn(2+)-binding site is contributed by Glu198.

Belongs to the peptidase M16 family. PreP subfamily. In terms of assembly, monomer and homodimer; homodimerization is induced by binding of the substrate. Zn(2+) serves as cofactor.

The protein resides in the mitochondrion intermembrane space. It is found in the mitochondrion matrix. Its function is as follows. Degrades mitochondrial transit peptides after their cleavage in the intermembrane space or in the matrix, and presequence peptides; clearance of these peptides is required to keep the presequence processing machinery running. Preferentially cleaves the N-terminal side of paired basic amino acid residues. Also degrades other unstructured peptides. May function as an ATP-dependent peptidase as opposed to a metalloendopeptidase. In Candida albicans (strain SC5314 / ATCC MYA-2876) (Yeast), this protein is Presequence protease, mitochondrial (CYM1).